The primary structure comprises 176 residues: Large ribosomal subunit protein uL6 (176 aa).

Belongs to the universal ribosomal protein uL6 family. In terms of assembly, part of the 50S ribosomal subunit.

Functionally, this protein binds to the 23S rRNA, and is important in its secondary structure. It is located near the subunit interface in the base of the L7/L12 stalk, and near the tRNA binding site of the peptidyltransferase center. The protein is Large ribosomal subunit protein uL6 of Methanospirillum hungatei JF-1 (strain ATCC 27890 / DSM 864 / NBRC 100397 / JF-1).